Reading from the N-terminus, the 417-residue chain is Spermidine/putrescine import ATP-binding protein PotA (417 aa).

Positions Ile-5–Val-308 constitute an ABC transporter domain. Gly-37 to Thr-44 is an ATP binding site. Residues Asp-105 to Lys-177 are insert.

This sequence belongs to the ABC transporter superfamily. Spermidine/putrescine importer (TC 3.A.1.11.1) family. In terms of assembly, the complex is composed of two ATP-binding proteins (PotA), two transmembrane proteins (PotB and PotC) and a solute-binding protein (PotD).

The protein localises to the cell membrane. It catalyses the reaction ATP + H2O + polyamine-[polyamine-binding protein]Side 1 = ADP + phosphate + polyamineSide 2 + [polyamine-binding protein]Side 1.. Functionally, part of the ABC transporter complex PotABCD involved in spermidine/putrescine import. Responsible for energy coupling to the transport system. The chain is Spermidine/putrescine import ATP-binding protein PotA from Onion yellows phytoplasma (strain OY-M).